We begin with the raw amino-acid sequence, 141 residues long: Large ribosomal subunit protein uL11 (141 aa).

The protein belongs to the universal ribosomal protein uL11 family. Part of the ribosomal stalk of the 50S ribosomal subunit. Interacts with L10 and the large rRNA to form the base of the stalk. L10 forms an elongated spine to which L12 dimers bind in a sequential fashion forming a multimeric L10(L12)X complex. One or more lysine residues are methylated.

In terms of biological role, forms part of the ribosomal stalk which helps the ribosome interact with GTP-bound translation factors. In Parasynechococcus marenigrum (strain WH8102), this protein is Large ribosomal subunit protein uL11.